We begin with the raw amino-acid sequence, 45 residues long: Large ribosomal subunit protein bL34c (45 aa).

The tract at residues 1 to 21 (MIQRTLTGTNRKKTKRSGFRS) is disordered. Positions 10 to 19 (NRKKTKRSGF) are enriched in basic residues.

The protein belongs to the bacterial ribosomal protein bL34 family.

It localises to the plastid. Its subcellular location is the chloroplast. This is Large ribosomal subunit protein bL34c (rpl34) from Cyanidium caldarium (Red alga).